Reading from the N-terminus, the 245-residue chain is Extracellular protein ARB_04177 (245 aa).

Its subcellular location is the secreted. This chain is Extracellular protein ARB_04177, found in Arthroderma benhamiae (strain ATCC MYA-4681 / CBS 112371) (Trichophyton mentagrophytes).